The following is a 190-amino-acid chain: Probable chorismate pyruvate-lyase (190 aa).

The substrate site is built by Arg77, Leu115, and Glu174.

The protein belongs to the UbiC family.

The protein localises to the cytoplasm. The catalysed reaction is chorismate = 4-hydroxybenzoate + pyruvate. It functions in the pathway cofactor biosynthesis; ubiquinone biosynthesis. In terms of biological role, removes the pyruvyl group from chorismate, with concomitant aromatization of the ring, to provide 4-hydroxybenzoate (4HB) for the ubiquinone pathway. This chain is Probable chorismate pyruvate-lyase, found in Shewanella sp. (strain MR-4).